The following is a 415-amino-acid chain: Adenylosuccinate synthetase (415 aa).

GTP contacts are provided by residues 11 to 17 (GDEGKGK) and 39 to 41 (GHT). The active-site Proton acceptor is the Asp-12. Asp-12 and Gly-39 together coordinate Mg(2+). IMP contacts are provided by residues 12 to 15 (DEGK), 37 to 40 (NAGH), Thr-124, Arg-138, Gln-218, Thr-233, and Arg-297. His-40 (proton donor) is an active-site residue. 293–299 (TTTGRAR) is a binding site for substrate. GTP contacts are provided by residues Arg-299, 325-327 (KLD), and 403-405 (STS).

The protein belongs to the adenylosuccinate synthetase family. As to quaternary structure, homodimer. Requires Mg(2+) as cofactor.

It is found in the cytoplasm. The enzyme catalyses IMP + L-aspartate + GTP = N(6)-(1,2-dicarboxyethyl)-AMP + GDP + phosphate + 2 H(+). It functions in the pathway purine metabolism; AMP biosynthesis via de novo pathway; AMP from IMP: step 1/2. Functionally, plays an important role in the de novo pathway of purine nucleotide biosynthesis. Catalyzes the first committed step in the biosynthesis of AMP from IMP. The protein is Adenylosuccinate synthetase of Helicobacter hepaticus (strain ATCC 51449 / 3B1).